A 142-amino-acid polypeptide reads, in one-letter code: Large ribosomal subunit protein uL13 (142 aa).

This sequence belongs to the universal ribosomal protein uL13 family. Part of the 50S ribosomal subunit.

This protein is one of the early assembly proteins of the 50S ribosomal subunit, although it is not seen to bind rRNA by itself. It is important during the early stages of 50S assembly. This Citrifermentans bemidjiense (strain ATCC BAA-1014 / DSM 16622 / JCM 12645 / Bem) (Geobacter bemidjiensis) protein is Large ribosomal subunit protein uL13.